The following is a 256-amino-acid chain: Metallo-beta-lactamase type 2 (256 aa).

Residues 1–29 form the signal peptide; sequence MKNTLLKLGVCVSLLGITPFVSTISSVQA. Residues His-115, His-117, Asp-119, His-178, and Cys-197 each contribute to the Zn(2+) site. Positions 200 and 209 each coordinate substrate. His-239 contacts Zn(2+).

It belongs to the metallo-beta-lactamase superfamily. Class-B beta-lactamase family. As to quaternary structure, monomer. It depends on Zn(2+) as a cofactor.

It localises to the periplasm. The enzyme catalyses a beta-lactam + H2O = a substituted beta-amino acid. With respect to regulation, inhibited by chelating agents such as EDTA. Functionally, confers resistance to the different beta-lactams antibiotics (penicillin, cephalosporin and carbapenem) via the hydrolysis of the beta-lactam ring. Benzylpenicillin is a better substrate than cephalosporin C and ampicillin. In Bacillus cereus, this protein is Metallo-beta-lactamase type 2.